A 605-amino-acid chain; its full sequence is Phosphoenolpyruvate carboxykinase [GTP] (605 aa).

Substrate contacts are provided by residues R79 and 218–220; that span reads YGG. Residues K227 and H247 each contribute to the Mn(2+) site. Position 269 (S269) interacts with substrate. 270–275 lines the GTP pocket; sequence ACGKTN. The active site involves C271. D294 serves as a coordination point for Mn(2+). Over residues 364 to 381 the composition is skewed to basic and acidic residues; the sequence is LTDWKGRDWTPQSDEKAA. The interval 364 to 385 is disordered; sequence LTDWKGRDWTPQSDEKAAHPNS. 384-386 contributes to the substrate binding site; sequence NSR. Residues R386, R417, and 513-516 contribute to the GTP site; that span reads FGEN.

It belongs to the phosphoenolpyruvate carboxykinase [GTP] family. In terms of assembly, monomer. Mn(2+) serves as cofactor.

The protein resides in the cytoplasm. It catalyses the reaction oxaloacetate + GTP = phosphoenolpyruvate + GDP + CO2. It participates in carbohydrate biosynthesis; gluconeogenesis. In terms of biological role, catalyzes the conversion of oxaloacetate (OAA) to phosphoenolpyruvate (PEP), the rate-limiting step in the metabolic pathway that produces glucose from lactate and other precursors derived from the citric acid cycle. The sequence is that of Phosphoenolpyruvate carboxykinase [GTP] from Saccharopolyspora erythraea (strain ATCC 11635 / DSM 40517 / JCM 4748 / NBRC 13426 / NCIMB 8594 / NRRL 2338).